A 297-amino-acid polypeptide reads, in one-letter code: Thoeris protein ThsA (297 aa).

2 helical membrane-spanning segments follow: residues 32 to 52 (ALSI…FLDL) and 57 to 77 (RLII…VQFI).

Its subcellular location is the cell membrane. Activated by a signal molecule generated by ThsB. Probable membrane protein component of the Thoeris antiviral defense system, composed of ThsA and ThsB. Expression of ThsA and ThsB in B.subtilis (strain BEST7003) confers resistance to phages SBSphiC, SBSphiJ and SPO1. Activation by a signal generated by ThsB leads to phage resistance. This Bacillus amyloliquefaciens (strain Y2) (Bacillus amyloliquefaciens subsp. plantarum (strain B9601-Y2)) protein is Thoeris protein ThsA.